Consider the following 171-residue polypeptide: Large ribosomal subunit protein bL17 (171 aa).

The span at 140–152 (KREIQTKAREEKR) shows a compositional bias: basic and acidic residues. Positions 140-171 (KREIQTKAREEKRATRKSNSAPVSKETTSKKK) are disordered. Polar residues predominate over residues 156 to 165 (KSNSAPVSKE).

The protein belongs to the bacterial ribosomal protein bL17 family. Part of the 50S ribosomal subunit. Contacts protein L32.

The protein is Large ribosomal subunit protein bL17 of Leptospira interrogans serogroup Icterohaemorrhagiae serovar copenhageni (strain Fiocruz L1-130).